Reading from the N-terminus, the 195-residue chain is UPF0215 protein TGAM_0348 (195 aa).

This sequence belongs to the UPF0215 family.

The chain is UPF0215 protein TGAM_0348 from Thermococcus gammatolerans (strain DSM 15229 / JCM 11827 / EJ3).